The sequence spans 415 residues: L-threonine dehydratase biosynthetic IlvA (415 aa).

Position 53 is an N6-(pyridoxal phosphate)lysine (Lys53). Residues Asn80, 183–187, and Ser308 each bind pyridoxal 5'-phosphate; that span reads GGGGL. Residues 332 to 406 form the ACT-like domain; the sequence is HYFIIQFPQR…KGFEYREINK (75 aa).

It belongs to the serine/threonine dehydratase family. In terms of assembly, homotetramer. The cofactor is pyridoxal 5'-phosphate.

It carries out the reaction L-threonine = 2-oxobutanoate + NH4(+). The protein operates within amino-acid biosynthesis; L-isoleucine biosynthesis; 2-oxobutanoate from L-threonine: step 1/1. In terms of biological role, catalyzes the anaerobic formation of alpha-ketobutyrate and ammonia from threonine in a two-step reaction. The first step involved a dehydration of threonine and a production of enamine intermediates (aminocrotonate), which tautomerizes to its imine form (iminobutyrate). Both intermediates are unstable and short-lived. The second step is the nonenzymatic hydrolysis of the enamine/imine intermediates to form 2-ketobutyrate and free ammonia. In the low water environment of the cell, the second step is accelerated by RidA. This is L-threonine dehydratase biosynthetic IlvA (ilvA) from Halalkalibacterium halodurans (strain ATCC BAA-125 / DSM 18197 / FERM 7344 / JCM 9153 / C-125) (Bacillus halodurans).